Consider the following 264-residue polypeptide: Thymidylate synthase (264 aa).

DUMP is bound by residues R21 and 126–127; that span reads RR. Residue C146 is the Nucleophile of the active site. Residues 166–169, N177, and 207–209 contribute to the dUMP site; these read RSAD and HLY. Residue D169 coordinates (6R)-5,10-methylene-5,6,7,8-tetrahydrofolate. A263 provides a ligand contact to (6R)-5,10-methylene-5,6,7,8-tetrahydrofolate.

Belongs to the thymidylate synthase family. Bacterial-type ThyA subfamily. In terms of assembly, homodimer.

It localises to the cytoplasm. The catalysed reaction is dUMP + (6R)-5,10-methylene-5,6,7,8-tetrahydrofolate = 7,8-dihydrofolate + dTMP. It participates in pyrimidine metabolism; dTTP biosynthesis. Its function is as follows. Catalyzes the reductive methylation of 2'-deoxyuridine-5'-monophosphate (dUMP) to 2'-deoxythymidine-5'-monophosphate (dTMP) while utilizing 5,10-methylenetetrahydrofolate (mTHF) as the methyl donor and reductant in the reaction, yielding dihydrofolate (DHF) as a by-product. This enzymatic reaction provides an intracellular de novo source of dTMP, an essential precursor for DNA biosynthesis. This is Thymidylate synthase from Rhodopseudomonas palustris (strain ATCC BAA-98 / CGA009).